The primary structure comprises 288 residues: Methyltransferase ucsB (288 aa).

Residues aspartate 87 and aspartate 121–alanine 122 contribute to the S-adenosyl-L-methionine site.

It belongs to the class I-like SAM-binding methyltransferase superfamily.

Its pathway is mycotoxin biosynthesis. Its function is as follows. Methyltransferase; part of the gene cluster that mediates the biosynthesis of UCS1025A, a member of the pyrrolizidinone family that acts as a strong telomerase inhibitor and displays potent antibacterial and antitumor properties. These compounds share a hemiaminal-containing pyrrolizidinone core fused with a gamma-lactone, giving a furopyrrolizidine that is connected to a decalin fragment. The polyketide synthase module (PKS) of the PKS-NRPS ucsA is responsible for the synthesis of the polyketide backbone via the condensation of an acetyl-CoA starter unit with 6 malonyl-CoA units. The downstream nonribosomal peptide synthetase (NRPS) module then amidates the carboxyl end of the polyketide with a 2S,3S-methylproline derived from L-isoleucine by the 2-oxoglutarate-dependent dioxygenase ucsF which converts L-isoleucine to (4S,5S)-4-methylpyrroline-5-carboxylate that is further converted to 2S,3S-methylproline by the pyrroline-5-carboxylate reductase ucsG. Reductive release of the completed aminoacyl polyketide from the assembly line can form the 3-pyrrolin-2-one structure via an intramolecular Knoevenagel reaction. Because ucsA lacks a designated enoylreductase (ER) domain, the required activity is provided the enoyl reductase ucsL. This keto acyclic precursor is the substrate of the Diels-Alderase ucsH, that catalyzes the Diels-Alder cycloaddition. Oxidation of the 3S-methyl group to a carboxylate by the cytochrome P450 monooxygenase ucsK allows an oxa-Michael cyclization that might involve the reductase/dehydrogenase ucsI and which furnishes the furopyrrolizidine. The oxidase ucsJ likely plays a critical role in stereoselective reduction of the C5-C6 double bond to afford the required R-configured carboxylate group. Further enolization and oxidation at C5 by an unidentified enzyme affords the last intermediate that can undergo oxa-Michael cyclization to yield UCS1025A. The sequence is that of Methyltransferase ucsB from Acremonium sp.